The following is a 152-amino-acid chain: Deoxyuridine 5'-triphosphate nucleotidohydrolase (152 aa).

Substrate is bound by residues 71 to 73 (RSG), asparagine 84, 88 to 90 (LID), and methionine 98.

Belongs to the dUTPase family. The cofactor is Mg(2+).

It carries out the reaction dUTP + H2O = dUMP + diphosphate + H(+). The protein operates within pyrimidine metabolism; dUMP biosynthesis; dUMP from dCTP (dUTP route): step 2/2. Its function is as follows. This enzyme is involved in nucleotide metabolism: it produces dUMP, the immediate precursor of thymidine nucleotides and it decreases the intracellular concentration of dUTP so that uracil cannot be incorporated into DNA. This chain is Deoxyuridine 5'-triphosphate nucleotidohydrolase, found in Serratia proteamaculans (strain 568).